The primary structure comprises 365 residues: Phospho-N-acetylmuramoyl-pentapeptide-transferase (365 aa).

Helical transmembrane passes span 47–67 (LLAL…VVPL), 92–112 (PTMG…ILAG), 114–134 (SPLV…GWLD), 153–173 (LCLQ…QQGW), 180–200 (ITLP…LAVF), 215–235 (LDGL…LWLA), 239–259 (PAIA…LLHN), 281–301 (AIAI…LFVL), and 344–364 (TQVV…CWLL).

This sequence belongs to the glycosyltransferase 4 family. MraY subfamily. Mg(2+) serves as cofactor.

It localises to the cell inner membrane. The enzyme catalyses UDP-N-acetyl-alpha-D-muramoyl-L-alanyl-gamma-D-glutamyl-meso-2,6-diaminopimeloyl-D-alanyl-D-alanine + di-trans,octa-cis-undecaprenyl phosphate = di-trans,octa-cis-undecaprenyl diphospho-N-acetyl-alpha-D-muramoyl-L-alanyl-D-glutamyl-meso-2,6-diaminopimeloyl-D-alanyl-D-alanine + UMP. It participates in cell wall biogenesis; peptidoglycan biosynthesis. Functionally, catalyzes the initial step of the lipid cycle reactions in the biosynthesis of the cell wall peptidoglycan: transfers peptidoglycan precursor phospho-MurNAc-pentapeptide from UDP-MurNAc-pentapeptide onto the lipid carrier undecaprenyl phosphate, yielding undecaprenyl-pyrophosphoryl-MurNAc-pentapeptide, known as lipid I. The chain is Phospho-N-acetylmuramoyl-pentapeptide-transferase from Synechococcus elongatus (strain ATCC 33912 / PCC 7942 / FACHB-805) (Anacystis nidulans R2).